The sequence spans 486 residues: Malonate-semialdehyde dehydrogenase 1 (486 aa).

Positions 154, 178, 181, 182, and 231 each coordinate NAD(+). Residue cysteine 286 is the Nucleophile of the active site. An NAD(+)-binding site is contributed by glutamate 386.

It belongs to the aldehyde dehydrogenase family. IolA subfamily. As to quaternary structure, homotetramer.

The catalysed reaction is 3-oxopropanoate + NAD(+) + CoA + H2O = hydrogencarbonate + acetyl-CoA + NADH + H(+). The enzyme catalyses 2-methyl-3-oxopropanoate + NAD(+) + CoA + H2O = propanoyl-CoA + hydrogencarbonate + NADH + H(+). The protein operates within polyol metabolism; myo-inositol degradation into acetyl-CoA; acetyl-CoA from myo-inositol: step 7/7. Catalyzes the oxidation of malonate semialdehyde (MSA) and methylmalonate semialdehyde (MMSA) into acetyl-CoA and propanoyl-CoA, respectively. Is involved in a myo-inositol catabolic pathway. Bicarbonate, and not CO2, is the end-product of the enzymatic reaction. The polypeptide is Malonate-semialdehyde dehydrogenase 1 (Bacillus thuringiensis (strain Al Hakam)).